Here is a 392-residue protein sequence, read N- to C-terminus: Cyclic di-GMP phosphodiesterase RocR (392 aa).

Residues 5–126 (NVLVLEDEPF…RITALLTRYN (122 aa)) enclose the Response regulatory domain. D56 carries the post-translational modification 4-aspartylphosphate. The EAL domain maps to 140–392 (ELPSVADVVR…QHFLDYCSGS (253 aa)). The Mg(2+) site is built by E175, N233, E265, and D295. E352 (proton acceptor) is an active-site residue.

As to quaternary structure, homotetramer. Exhibits a highly unusual tetrameric structure arranged around a single dyad, with the four subunits adopting two distinctly different conformations, with only two active sites accessible for substrate binding. Interacts with RocS1. The cofactor is Mg(2+).

The catalysed reaction is 3',3'-c-di-GMP + H2O = 5'-phosphoguanylyl(3'-&gt;5')guanosine + H(+). With respect to regulation, phosphorylation of Asp-56 probably induces local conformational changes in the response regulatory domain. These structural changes are transmitted to the adjacent EAL domain, then the signal is further transmitted down to the active site. The phosphodiesterase activity is inhibited by Ca(2+) and Zn(2+). Phosphodiesterase activity is inhibited by a benzoisothiazolinone derivative that specifically inhibited RocR, but not some other phosphodiesterases. Functionally, phosphodiesterase (PDE) that catalyzes the hydrolysis of cyclic diguanylate (c-di-GMP) to 5'-pGpG. Cannot use cyclic AMP or cyclic GMP. Part of the RocSAR two-component regulatory signaling system (also known as the SadARS system), which regulates biofilm maturation, type III secretion and expression of the cup fimbrial-gene cluster. Negatively regulates the expression of cup genes by antagonizing the activity of RocA1. The polypeptide is Cyclic di-GMP phosphodiesterase RocR (Pseudomonas aeruginosa (strain ATCC 15692 / DSM 22644 / CIP 104116 / JCM 14847 / LMG 12228 / 1C / PRS 101 / PAO1)).